The following is a 305-amino-acid chain: N-acetylmuramic acid 6-phosphate etherase (305 aa).

One can recognise an SIS domain in the interval 54 to 217 (AVPQLERGGR…SSALMVRLGK (164 aa)). Glu82 (proton donor) is an active-site residue. Residue Glu113 is part of the active site.

The protein belongs to the GCKR-like family. MurNAc-6-P etherase subfamily. Homodimer.

It carries out the reaction N-acetyl-D-muramate 6-phosphate + H2O = N-acetyl-D-glucosamine 6-phosphate + (R)-lactate. The protein operates within amino-sugar metabolism; N-acetylmuramate degradation. Its function is as follows. Specifically catalyzes the cleavage of the D-lactyl ether substituent of MurNAc 6-phosphate, producing GlcNAc 6-phosphate and D-lactate. The chain is N-acetylmuramic acid 6-phosphate etherase from Deinococcus radiodurans (strain ATCC 13939 / DSM 20539 / JCM 16871 / CCUG 27074 / LMG 4051 / NBRC 15346 / NCIMB 9279 / VKM B-1422 / R1).